Consider the following 169-residue polypeptide: Translationally-controlled tumor protein homolog (169 aa).

Residues 1-169 (MLIYKDILTG…WKHGLEEMKV (169 aa)) enclose the TCTP domain.

It belongs to the TCTP family.

The protein resides in the cytoplasm. It is found in the cytoskeleton. Functionally, involved in protein synthesis. Involved in microtubule stabilization. The sequence is that of Translationally-controlled tumor protein homolog from Alternaria alternata (Alternaria rot fungus).